A 133-amino-acid chain; its full sequence is Hemoglobin subunit alpha-2 (133 aa).

Residues 1 to 133 enclose the Globin domain; it reads NVKAVWEHVK…VKNVLTSRYR (133 aa). Histidine 50 is a binding site for O2. Histidine 79 lines the heme b pocket.

It belongs to the globin family. As to quaternary structure, minor hemoglobin is a heterotetramer of two alpha-2 chains and two beta-2 chains. Red blood cells.

Its function is as follows. Involved in oxygen transport from the lung to the various peripheral tissues. The protein is Hemoglobin subunit alpha-2 of Pleurodeles waltl (Iberian ribbed newt).